The primary structure comprises 166 residues: Putative 4-hydroxy-4-methyl-2-oxoglutarate aldolase (166 aa).

Residues Gly81–Ile84 and Arg103 contribute to the substrate site. An a divalent metal cation-binding site is contributed by Asp104.

It belongs to the class II aldolase/RraA-like family. In terms of assembly, homotrimer. It depends on a divalent metal cation as a cofactor.

The enzyme catalyses 4-hydroxy-4-methyl-2-oxoglutarate = 2 pyruvate. It carries out the reaction oxaloacetate + H(+) = pyruvate + CO2. Its function is as follows. Catalyzes the aldol cleavage of 4-hydroxy-4-methyl-2-oxoglutarate (HMG) into 2 molecules of pyruvate. Also contains a secondary oxaloacetate (OAA) decarboxylase activity due to the common pyruvate enolate transition state formed following C-C bond cleavage in the retro-aldol and decarboxylation reactions. The sequence is that of Putative 4-hydroxy-4-methyl-2-oxoglutarate aldolase from Corynebacterium glutamicum (strain ATCC 13032 / DSM 20300 / JCM 1318 / BCRC 11384 / CCUG 27702 / LMG 3730 / NBRC 12168 / NCIMB 10025 / NRRL B-2784 / 534).